The chain runs to 125 residues: Small ribosomal subunit protein uS12 (125 aa).

Aspartate 89 carries the post-translational modification 3-methylthioaspartic acid.

Belongs to the universal ribosomal protein uS12 family. As to quaternary structure, part of the 30S ribosomal subunit. Contacts proteins S8 and S17. May interact with IF1 in the 30S initiation complex.

With S4 and S5 plays an important role in translational accuracy. Functionally, interacts with and stabilizes bases of the 16S rRNA that are involved in tRNA selection in the A site and with the mRNA backbone. Located at the interface of the 30S and 50S subunits, it traverses the body of the 30S subunit contacting proteins on the other side and probably holding the rRNA structure together. The combined cluster of proteins S8, S12 and S17 appears to hold together the shoulder and platform of the 30S subunit. This Clostridium botulinum (strain ATCC 19397 / Type A) protein is Small ribosomal subunit protein uS12.